Reading from the N-terminus, the 66-residue chain is Large ribosomal subunit protein bL33c (66 aa).

It belongs to the bacterial ribosomal protein bL33 family.

It localises to the plastid. The protein resides in the chloroplast. This is Large ribosomal subunit protein bL33c from Lotus japonicus (Lotus corniculatus var. japonicus).